A 260-amino-acid polypeptide reads, in one-letter code: Uroplakin-1b (260 aa).

The Cytoplasmic segment spans residues 1 to 15 (MAKDNSTVRCFQGLL). The chain crosses the membrane as a helical span at residues 16-36 (IFGNVIIGCCGIALTAECIFF). The Extracellular portion of the chain corresponds to 37-60 (VSDQHSLYPLLEATDNDDIYGAAW). A helical membrane pass occupies residues 61 to 81 (IGIFVGICLFCLSVLGIVGIM). Residues 82–86 (KSSRK) are Cytoplasmic-facing. The helical transmembrane segment at 87–107 (ILLAYFILMFIVYAFEVASCI) threads the bilayer. The Extracellular portion of the chain corresponds to 108 to 229 (TAATQQDFFT…ELISGPMNRH (122 aa)). Residues 230–250 (AWGVAWFGFAILCWTFWVLLG) form a helical membrane-spanning segment. The Cytoplasmic portion of the chain corresponds to 251–260 (TMFYWSRIEY).

It belongs to the tetraspanin (TM4SF) family. As to quaternary structure, heterodimer with uroplakin-3A (UPK3A) or uroplakin-3B (UPK3B). N-glycosylated with high-mannose oligosaccharides. As to expression, bladder epithelium.

Its subcellular location is the membrane. Component of the asymmetric unit membrane (AUM); a highly specialized biomembrane elaborated by terminally differentiated urothelial cells. May play an important role in normal bladder epithelial physiology, possibly in regulating membrane permeability of superficial umbrella cells or in stabilizing the apical membrane through AUM/cytoskeletal interactions. The protein is Uroplakin-1b (UPK1B) of Homo sapiens (Human).